A 305-amino-acid polypeptide reads, in one-letter code: uncharacterized protein (305 aa).

The N-terminal stretch at 1–29 (MSKAVSEILGYMYIFGIVMAVLAIVFVQV) is a signal peptide.

This is an uncharacterized protein from Archaeoglobus fulgidus (strain ATCC 49558 / DSM 4304 / JCM 9628 / NBRC 100126 / VC-16).